The primary structure comprises 142 residues: MKTFTAKPETVKRDWYVVDADGKTLGRLATEIARRLRGKHKAEYTPHVDTGDYIIVLNAEKVAVTGHKRTDKVYYRHTGHVGGIKQATFEEMIARSPERVIEIAVKGMLPKGPLGRAMYRKLKVYAGAEHNHAAQQPQVLDI.

It belongs to the universal ribosomal protein uL13 family. In terms of assembly, part of the 50S ribosomal subunit.

In terms of biological role, this protein is one of the early assembly proteins of the 50S ribosomal subunit, although it is not seen to bind rRNA by itself. It is important during the early stages of 50S assembly. The protein is Large ribosomal subunit protein uL13 of Proteus mirabilis (strain HI4320).